We begin with the raw amino-acid sequence, 513 residues long: Melianol synthase CYP71BQ4 (513 aa).

Residues 10–30 traverse the membrane as a helical segment; sequence MLHLPSLPVLLSFLLFLLMLI. Heme is bound at residue Cys451.

This sequence belongs to the cytochrome P450 family. Requires heme as cofactor. In terms of tissue distribution, accumulates in mature fruits and in juice vesicles.

Its subcellular location is the membrane. The catalysed reaction is dihydroniloticin + 2 reduced [NADPH--hemoprotein reductase] + 2 O2 = melianol + 2 oxidized [NADPH--hemoprotein reductase] + 3 H2O + 2 H(+). It participates in secondary metabolite biosynthesis; terpenoid biosynthesis. Monooxygenase involved in the biosynthesis of limonoids triterpene natural products such as limonin, a compound with insecticidal activity responsible for the bitter taste in citrus. Catalyzes the conversion of dihydroniloticin to the protolimonoid melianol. The polypeptide is Melianol synthase CYP71BQ4 (Citrus sinensis (Sweet orange)).